The chain runs to 101 residues: Large ribosomal subunit protein uL23 (101 aa).

Belongs to the universal ribosomal protein uL23 family. As to quaternary structure, part of the 50S ribosomal subunit. Contacts protein L29, and trigger factor when it is bound to the ribosome.

Functionally, one of the early assembly proteins it binds 23S rRNA. One of the proteins that surrounds the polypeptide exit tunnel on the outside of the ribosome. Forms the main docking site for trigger factor binding to the ribosome. This chain is Large ribosomal subunit protein uL23, found in Wigglesworthia glossinidia brevipalpis.